The primary structure comprises 321 residues: Phospho-N-acetylmuramoyl-pentapeptide-transferase (321 aa).

10 helical membrane-spanning segments follow: residues 1-21, 50-70, 76-96, 112-132, 140-160, 176-196, 200-220, 225-245, 250-270, and 300-320; these read MIFI…PILI, MGGL…IIFV, IILL…DDYI, FLAQ…FHLV, IPFV…IVFW, GLAT…SYML, AIGI…PYNL, VFMG…ISIM, LSLI…MLQV, and VVTV…WIGV.

This sequence belongs to the glycosyltransferase 4 family. MraY subfamily. Mg(2+) is required as a cofactor.

The protein localises to the cell membrane. The catalysed reaction is UDP-N-acetyl-alpha-D-muramoyl-L-alanyl-gamma-D-glutamyl-L-lysyl-D-alanyl-D-alanine + di-trans,octa-cis-undecaprenyl phosphate = Mur2Ac(oyl-L-Ala-gamma-D-Glu-L-Lys-D-Ala-D-Ala)-di-trans,octa-cis-undecaprenyl diphosphate + UMP. The protein operates within cell wall biogenesis; peptidoglycan biosynthesis. Its function is as follows. Catalyzes the initial step of the lipid cycle reactions in the biosynthesis of the cell wall peptidoglycan: transfers peptidoglycan precursor phospho-MurNAc-pentapeptide from UDP-MurNAc-pentapeptide onto the lipid carrier undecaprenyl phosphate, yielding undecaprenyl-pyrophosphoryl-MurNAc-pentapeptide, known as lipid I. In Staphylococcus epidermidis (strain ATCC 12228 / FDA PCI 1200), this protein is Phospho-N-acetylmuramoyl-pentapeptide-transferase.